The primary structure comprises 297 residues: 33 kDa chaperonin (297 aa).

Disulfide bonds link cysteine 239-cysteine 241 and cysteine 272-cysteine 275.

It belongs to the HSP33 family. Under oxidizing conditions two disulfide bonds are formed involving the reactive cysteines. Under reducing conditions zinc is bound to the reactive cysteines and the protein is inactive.

It is found in the cytoplasm. Redox regulated molecular chaperone. Protects both thermally unfolding and oxidatively damaged proteins from irreversible aggregation. Plays an important role in the bacterial defense system toward oxidative stress. The protein is 33 kDa chaperonin of Synechococcus elongatus (strain ATCC 33912 / PCC 7942 / FACHB-805) (Anacystis nidulans R2).